The chain runs to 258 residues: Tryptophan synthase alpha chain (258 aa).

Active-site proton acceptor residues include Glu47 and Asp58.

The protein belongs to the TrpA family. Tetramer of two alpha and two beta chains.

The catalysed reaction is (1S,2R)-1-C-(indol-3-yl)glycerol 3-phosphate + L-serine = D-glyceraldehyde 3-phosphate + L-tryptophan + H2O. It functions in the pathway amino-acid biosynthesis; L-tryptophan biosynthesis; L-tryptophan from chorismate: step 5/5. Functionally, the alpha subunit is responsible for the aldol cleavage of indoleglycerol phosphate to indole and glyceraldehyde 3-phosphate. The sequence is that of Tryptophan synthase alpha chain from Bacillus cereus (strain ATCC 14579 / DSM 31 / CCUG 7414 / JCM 2152 / NBRC 15305 / NCIMB 9373 / NCTC 2599 / NRRL B-3711).